A 229-amino-acid polypeptide reads, in one-letter code: 3-dehydroquinate dehydratase (229 aa).

Residues 33–35 and Arg65 contribute to the 3-dehydroquinate site; that span reads EWR. His121 (proton donor/acceptor) is an active-site residue. The active-site Schiff-base intermediate with substrate is Lys146. 3-dehydroquinate is bound by residues Arg188, Ser207, and Gln211.

This sequence belongs to the type-I 3-dehydroquinase family. As to quaternary structure, homodimer.

It catalyses the reaction 3-dehydroquinate = 3-dehydroshikimate + H2O. The protein operates within metabolic intermediate biosynthesis; chorismate biosynthesis; chorismate from D-erythrose 4-phosphate and phosphoenolpyruvate: step 3/7. Its function is as follows. Involved in the third step of the chorismate pathway, which leads to the biosynthesis of aromatic amino acids. Catalyzes the cis-dehydration of 3-dehydroquinate (DHQ) and introduces the first double bond of the aromatic ring to yield 3-dehydroshikimate. This chain is 3-dehydroquinate dehydratase, found in Lactococcus lactis subsp. cremoris (strain MG1363).